Here is a 527-residue protein sequence, read N- to C-terminus: Cyclin-L1 (527 aa).

The disordered stretch occupies residues 1-37; sequence MASGPHPTSTAAAASASSAAPSAGGSSSGTTTTTTTT. Cyclin-like regions lie at residues 89–191 and 204–288; these read ELIQ…RVLK and KIIV…ETLR. Thr-326 bears the Phosphothreonine mark. A disordered region spans residues 327–527; that stretch reads PALSTLGGFS…SRSGHGRHRR (201 aa). Phosphoserine occurs at positions 336 and 339. Residues Lys-340 and Lys-348 each participate in a glycyl lysine isopeptide (Lys-Gly) (interchain with G-Cter in SUMO2) cross-link. Over residues 343 to 353 the composition is skewed to basic and acidic residues; that stretch reads SPREVKAEEKS. Ser-353 and Ser-356 each carry phosphoserine. Over residues 362 to 371 the composition is skewed to basic and acidic residues; sequence VKKEPEDRQQ. Residue Lys-363 forms a Glycyl lysine isopeptide (Lys-Gly) (interchain with G-Cter in SUMO2) linkage. Ser-375 carries the post-translational modification Phosphoserine. Composition is skewed to basic residues over residues 383-419, 439-453, 461-477, and 487-499; these read DSKR…RRSR, RRHH…KAKH, SNRH…RSQS, and KKHR…HRDR. The tract at residues 391 to 433 is RS; it reads RSASRSRSRTRSRSRSHTPRRHYNNRRSRSGTYSSRSRSRSRS. Phosphoserine is present on Ser-446. Residues 500-509 show a composition bias toward basic and acidic residues; the sequence is RERSRSFERS. Residues 510–527 are compositionally biased toward basic residues; that stretch reads HKGKHHGGSRSGHGRHRR.

Belongs to the cyclin family. Cyclin L subfamily. In terms of assembly, interacts with POLR2A via its hyperphosphorylated C-terminal domain (CTD). Interacts with CDK11A, CDK11B, CDK12 and CDK13. May form a ternary complex with CDK11B and casein kinase II (CKII). Interacts with pre-mRNA-splicing factors, including at least SRSF1, SRSF2 AND SRSF7/SLU7. In terms of tissue distribution, ubiquitous with higher level in liver; expressed in striatal neurons.

Its subcellular location is the nucleus speckle. The protein resides in the nucleus. It is found in the nucleoplasm. Functionally, involved in pre-mRNA splicing. Functions in association with cyclin-dependent kinases (CDKs). May play a role in the regulation of RNA polymerase II (pol II). Inhibited by the CDK-specific inhibitor CDKN1A/p21. In Rattus norvegicus (Rat), this protein is Cyclin-L1 (Ccnl1).